A 260-amino-acid polypeptide reads, in one-letter code: Coiled-coil domain-containing protein 127 (260 aa).

The stretch at 47–135 (ESQKEIEKAR…QIIQEKSQRQ (89 aa)) forms a coiled coil.

The protein is Coiled-coil domain-containing protein 127 (Ccdc127) of Rattus norvegicus (Rat).